The primary structure comprises 384 residues: MGMQMKNFKKMMTLMALCLSVAITTSGYATTLPDIPEPLKNGTGAIDNNGVIYVGLGTAGTSWYKIDLKKQHKDWERIKSFPGGAREQSVSVFLNDELYVFGGVGKKNSESPLQVYSDVYKYSPVKNTWQKVDTISPVGLTGHTGVKLNETMVLITGGVNEHIFDKYFIDIEAADESEKNKVIYNYFNKPAKDYFFNKIVFIYNAKENTWKNAGELPGAGTAGSSSVMENNFLMLINGELKPGLRTDVIYRAMWDNDKLTWLKNSQLPPSPGEQQQEGLAGAFSGYSHGVLLVGGGANFPGAKQNYTNGKFYSHEGINKKWRDEVYGLVNGHWQYMGKMKQPLGYGVSVSYGDEVFLIGGENAKGKPVSSVTSFTMRDGNLLIK.

The signal sequence occupies residues 1–29; the sequence is MGMQMKNFKKMMTLMALCLSVAITTSGYA. Kelch repeat units lie at residues 51–95, 97–149, 151–184, 185–230, 233–282, 304–353, and 355–384; these read VIYV…VFLN, ELYV…VKLN, TMVLITGGVNEHIFDKYFIDIEAADESEKNKVIY, NYFN…VMEN, LMLI…LAGA, QNYT…SYGD, and VFLIGGENAKGKPVSSVTSFTMRDGNLLIK. Catalysis depends on E239, which acts as the Proton acceptor.

Belongs to the NanM family. In terms of assembly, homodimer.

The protein localises to the periplasm. The enzyme catalyses N-acetyl-alpha-neuraminate = N-acetyl-beta-neuraminate. Its function is as follows. Converts alpha-N-acetylneuranimic acid (Neu5Ac) to the beta-anomer, accelerating the equilibrium between the alpha- and beta-anomers. Probably facilitates sialidase-negative bacteria to compete successfully for limited amounts of extracellular Neu5Ac, which is likely taken up in the beta-anomer. In addition, the rapid removal of sialic acid from solution might be advantageous to the bacterium to damp down host responses. The sequence is that of N-acetylneuraminate epimerase from Salmonella enteritidis PT4 (strain P125109).